The following is a 146-amino-acid chain: Inclusion membrane protein D (146 aa).

The next 2 membrane-spanning stretches (helical) occupy residues 38-58 (AAVA…GLLF) and 68-88 (VVAA…ALVG).

Its subcellular location is the secreted. The protein resides in the host vacuole. The protein localises to the host pathogen-containing vacuole. It is found in the host pathogen-containing vacuole membrane. In terms of biological role, host inclusion membrane protein probably involved in early modification events of the chlamydial inclusion. In Chlamydia trachomatis serovar L2 (strain ATCC VR-902B / DSM 19102 / 434/Bu), this protein is Inclusion membrane protein D.